We begin with the raw amino-acid sequence, 155 residues long: 6,7-dimethyl-8-ribityllumazine synthase (155 aa).

5-amino-6-(D-ribitylamino)uracil is bound by residues Phe23, Ala57 to Glu59, and Ala81 to Ile83. (2S)-2-hydroxy-3-oxobutyl phosphate is bound at residue Ala86–Thr87. His89 acts as the Proton donor in catalysis. Phe114 contributes to the 5-amino-6-(D-ribitylamino)uracil binding site. Arg128 is a binding site for (2S)-2-hydroxy-3-oxobutyl phosphate.

The protein belongs to the DMRL synthase family.

The catalysed reaction is (2S)-2-hydroxy-3-oxobutyl phosphate + 5-amino-6-(D-ribitylamino)uracil = 6,7-dimethyl-8-(1-D-ribityl)lumazine + phosphate + 2 H2O + H(+). It participates in cofactor biosynthesis; riboflavin biosynthesis; riboflavin from 2-hydroxy-3-oxobutyl phosphate and 5-amino-6-(D-ribitylamino)uracil: step 1/2. Its function is as follows. Catalyzes the formation of 6,7-dimethyl-8-ribityllumazine by condensation of 5-amino-6-(D-ribitylamino)uracil with 3,4-dihydroxy-2-butanone 4-phosphate. This is the penultimate step in the biosynthesis of riboflavin. In Geotalea uraniireducens (strain Rf4) (Geobacter uraniireducens), this protein is 6,7-dimethyl-8-ribityllumazine synthase.